Reading from the N-terminus, the 248-residue chain is Small ribosomal subunit protein uS2 (248 aa).

It belongs to the universal ribosomal protein uS2 family.

The chain is Small ribosomal subunit protein uS2 from Herminiimonas arsenicoxydans.